A 783-amino-acid chain; its full sequence is ATP-dependent DNA helicase Hel308 (783 aa).

ATP-binding positions include Gln29 and Val47–Thr54. Positions Glu34 to Asp209 constitute a Helicase ATP-binding domain. The short motif at Asp154–His157 is the DEAH box element. Positions Gln242–Ala443 constitute a Helicase C-terminal domain. A disordered region spans residues Glu744–Ser783.

This sequence belongs to the helicase family. Hel308 subfamily. In terms of assembly, monomer.

The enzyme catalyses Couples ATP hydrolysis with the unwinding of duplex DNA by translocating in the 3'-5' direction.. It catalyses the reaction ATP + H2O = ADP + phosphate + H(+). Its function is as follows. DNA-dependent ATPase and 3'-5' DNA helicase that may be involved in repair of stalled replication forks. The sequence is that of ATP-dependent DNA helicase Hel308 from Halobacterium salinarum (strain ATCC 700922 / JCM 11081 / NRC-1) (Halobacterium halobium).